A 202-amino-acid chain; its full sequence is Acireductone dioxygenase (202 aa).

Fe(2+)-binding residues include His-110, His-112, Glu-116, and His-154. Ni(2+)-binding residues include His-110, His-112, Glu-116, and His-154.

Belongs to the acireductone dioxygenase (ARD) family. In terms of assembly, monomer. Requires Fe(2+) as cofactor. Ni(2+) serves as cofactor.

It carries out the reaction 1,2-dihydroxy-5-(methylsulfanyl)pent-1-en-3-one + O2 = 3-(methylsulfanyl)propanoate + CO + formate + 2 H(+). The catalysed reaction is 1,2-dihydroxy-5-(methylsulfanyl)pent-1-en-3-one + O2 = 4-methylsulfanyl-2-oxobutanoate + formate + 2 H(+). The protein operates within amino-acid biosynthesis; L-methionine biosynthesis via salvage pathway; L-methionine from S-methyl-5-thio-alpha-D-ribose 1-phosphate: step 5/6. Catalyzes 2 different reactions between oxygen and the acireductone 1,2-dihydroxy-3-keto-5-methylthiopentene (DHK-MTPene) depending upon the metal bound in the active site. Fe-containing acireductone dioxygenase (Fe-ARD) produces formate and 2-keto-4-methylthiobutyrate (KMTB), the alpha-ketoacid precursor of methionine in the methionine recycle pathway. Ni-containing acireductone dioxygenase (Ni-ARD) produces methylthiopropionate, carbon monoxide and formate, and does not lie on the methionine recycle pathway. The chain is Acireductone dioxygenase from Synechococcus sp. (strain CC9311).